A 339-amino-acid chain; its full sequence is Tetraacyldisaccharide 4'-kinase (339 aa).

An ATP-binding site is contributed by valine 62–threonine 69.

This sequence belongs to the LpxK family.

It catalyses the reaction a lipid A disaccharide + ATP = a lipid IVA + ADP + H(+). The protein operates within glycolipid biosynthesis; lipid IV(A) biosynthesis; lipid IV(A) from (3R)-3-hydroxytetradecanoyl-[acyl-carrier-protein] and UDP-N-acetyl-alpha-D-glucosamine: step 6/6. In terms of biological role, transfers the gamma-phosphate of ATP to the 4'-position of a tetraacyldisaccharide 1-phosphate intermediate (termed DS-1-P) to form tetraacyldisaccharide 1,4'-bis-phosphate (lipid IVA). The protein is Tetraacyldisaccharide 4'-kinase of Xylella fastidiosa (strain M12).